A 109-amino-acid polypeptide reads, in one-letter code: Nucleoid-associated protein Sama_1311 (109 aa).

It belongs to the YbaB/EbfC family. Homodimer.

Its subcellular location is the cytoplasm. The protein localises to the nucleoid. Its function is as follows. Binds to DNA and alters its conformation. May be involved in regulation of gene expression, nucleoid organization and DNA protection. This chain is Nucleoid-associated protein Sama_1311, found in Shewanella amazonensis (strain ATCC BAA-1098 / SB2B).